The primary structure comprises 394 residues: Elongation factor Tu (394 aa).

Residues 10–204 (KLHINVGTIG…VLDSYIPEPK (195 aa)) enclose the tr-type G domain. Residues 19–26 (GHVDHGKT) are G1. Residue 19-26 (GHVDHGKT) participates in GTP binding. Threonine 26 contacts Mg(2+). Residues 60-64 (GITIN) form a G2 region. Residues 81–84 (DCPG) form a G3 region. Residues 81-85 (DCPGH) and 136-139 (NKCD) each bind GTP. The tract at residues 136-139 (NKCD) is G4. The G5 stretch occupies residues 174-176 (SAL).

Belongs to the TRAFAC class translation factor GTPase superfamily. Classic translation factor GTPase family. EF-Tu/EF-1A subfamily. Monomer.

It localises to the cytoplasm. The catalysed reaction is GTP + H2O = GDP + phosphate + H(+). Functionally, GTP hydrolase that promotes the GTP-dependent binding of aminoacyl-tRNA to the A-site of ribosomes during protein biosynthesis. The protein is Elongation factor Tu of Baumannia cicadellinicola subsp. Homalodisca coagulata.